We begin with the raw amino-acid sequence, 386 residues long: MTSYLSDYVQQIKPSGIRKFFDLAATMEGVISLGVGEPDFVTAWNVREASILSLEQGYTSYTANAGLYSLREEISRYLSNRFDLSYSPDNELIVTVGASQALDIAIRAIVNPGEEVIIPEPCFVAYDALVSLAGGIPVHVHTTADKGFKATAADFEAAVTEKTKAILICSPSNPTGSVYSKEELNEIAEFAKKHDVIVLADEIYAELTYDEEFTSIAALPGMKERTVVISGFSKAFAMTGWRLGFAAAPSLLRDAMLKIHQYAMMCAPAMAQFAALEGLKNGMEDVEKMKKSYRRRRNLFVESLNEIGLSCHHPGGAFYAFPSIKSMGMSSEQFAEELLTQEKVAVVPGSVFGPSGEGYIRCSYATSIEQLQEALVRMKRFLHKTT.

K234 carries the post-translational modification N6-(pyridoxal phosphate)lysine.

Belongs to the class-I pyridoxal-phosphate-dependent aminotransferase family. The cofactor is pyridoxal 5'-phosphate.

It is found in the cytoplasm. The chain is Putative aminotransferase YugH (yugH) from Bacillus subtilis (strain 168).